Here is a 239-residue protein sequence, read N- to C-terminus: Lytic polysaccharide monooxygenase-like protein X325 (239 aa).

An N-terminal signal peptide occupies residues 1–24; the sequence is MVLPSSVSQWAALIALLCAGLANA. A Cu(2+)-binding site is contributed by His25. 6 N-linked (GlcNAc...) asparagine glycosylation sites follow: Asn41, Asn56, Asn79, Asn117, Asn150, and Asn197. 2 disulfides stabilise this stretch: Cys71–Cys176 and Cys141–Cys195. Ser214 carries the GPI-anchor amidated serine lipid modification. The propeptide at 215–239 is removed in mature form; the sequence is AAAPKSSLMSVLPVYMVALLSWAMM.

Belongs to the X325 family. Requires Cu(2+) as cofactor.

It is found in the cell membrane. Lytic polysaccharide monooxygenase-like protein that has diverged to biological functions other than polysaccharide degradation since it does not perform oxidative cleavage of polysaccharides. Acts as a cell surface-bound protein that functions in the copper-accumulation pathway. May also act as the major cell wall sensor that regulates MAP kinase-dependent hyphal anastomosis, the fusion of hyphal cells. This chain is Lytic polysaccharide monooxygenase-like protein X325, found in Aspergillus fumigatus (strain ATCC MYA-4609 / CBS 101355 / FGSC A1100 / Af293) (Neosartorya fumigata).